The primary structure comprises 93 residues: Large ribosomal subunit protein eL42 (93 aa).

Positions 11, 14, 72, and 75 each coordinate Zn(2+). The segment at 11–75 (CPHCHSHFEH…TDLKYRCSEC (65 aa)) adopts a C4-type zinc-finger fold.

This sequence belongs to the eukaryotic ribosomal protein eL42 family. In terms of assembly, part of the 50S ribosomal subunit. The cofactor is Zn(2+).

Binds to the 23S rRNA. In Natronomonas pharaonis (strain ATCC 35678 / DSM 2160 / CIP 103997 / JCM 8858 / NBRC 14720 / NCIMB 2260 / Gabara) (Halobacterium pharaonis), this protein is Large ribosomal subunit protein eL42 (rpl44e).